The primary structure comprises 215 residues: Probable GTP-binding protein EngB (215 aa).

The region spanning 31–215 is the EngB-type G domain; the sequence is GPPEIAFAGR…RAAILQAIAV (185 aa). GTP is bound by residues 39–46, 66–70, 93–96, 160–163, and 194–196; these read GRSNVGKS, GRTQE, DMPG, TKSD, and TSS. Residues Ser46 and Thr68 each contribute to the Mg(2+) site.

The protein belongs to the TRAFAC class TrmE-Era-EngA-EngB-Septin-like GTPase superfamily. EngB GTPase family. Requires Mg(2+) as cofactor.

In terms of biological role, necessary for normal cell division and for the maintenance of normal septation. The sequence is that of Probable GTP-binding protein EngB from Bartonella quintana (strain Toulouse) (Rochalimaea quintana).